The following is a 215-amino-acid chain: Peptide methionine sulfoxide reductase MsrA (215 aa).

Cys-58 is a catalytic residue.

It belongs to the MsrA Met sulfoxide reductase family.

The catalysed reaction is L-methionyl-[protein] + [thioredoxin]-disulfide + H2O = L-methionyl-(S)-S-oxide-[protein] + [thioredoxin]-dithiol. It catalyses the reaction [thioredoxin]-disulfide + L-methionine + H2O = L-methionine (S)-S-oxide + [thioredoxin]-dithiol. In terms of biological role, has an important function as a repair enzyme for proteins that have been inactivated by oxidation. Catalyzes the reversible oxidation-reduction of methionine sulfoxide in proteins to methionine. The chain is Peptide methionine sulfoxide reductase MsrA from Pseudomonas syringae pv. tomato (strain ATCC BAA-871 / DC3000).